Reading from the N-terminus, the 201-residue chain is dTTP/UTP pyrophosphatase (201 aa).

The Proton acceptor role is filled by Asp-76.

This sequence belongs to the Maf family. YhdE subfamily. A divalent metal cation serves as cofactor.

It localises to the cytoplasm. The enzyme catalyses dTTP + H2O = dTMP + diphosphate + H(+). The catalysed reaction is UTP + H2O = UMP + diphosphate + H(+). In terms of biological role, nucleoside triphosphate pyrophosphatase that hydrolyzes dTTP and UTP. May have a dual role in cell division arrest and in preventing the incorporation of modified nucleotides into cellular nucleic acids. The polypeptide is dTTP/UTP pyrophosphatase (Neisseria meningitidis serogroup A / serotype 4A (strain DSM 15465 / Z2491)).